A 380-amino-acid chain; its full sequence is Mitogen-activated protein kinase 3 (380 aa).

At Ala-2 the chain carries N-acetylalanine. One can recognise a Protein kinase domain in the interval 43–331 (YTQLQYIGEG…VEEALAHPYL (289 aa)). ATP contacts are provided by residues 49-57 (IGEGAYGMV) and Lys-72. Asp-167 functions as the Proton acceptor in the catalytic mechanism. Thr-199 is modified (phosphothreonine). Thr-203 is modified (phosphothreonine; by MAP2K1 and MAP2K2). Positions 203-205 (TEY) match the TXY motif. Tyr-205 is subject to Phosphotyrosine; by MAP2K1 and MAP2K2. Phosphothreonine; by autocatalysis is present on Thr-208.

It belongs to the protein kinase superfamily. CMGC Ser/Thr protein kinase family. MAP kinase subfamily. In terms of assembly, binds both upstream activators and downstream substrates in multimolecular complexes. Found in a complex with at least BRAF, HRAS, MAP2K1/MEK1, MAPK3 and RGS14. Interacts with TPR. Interacts with ADAM15, ARRB2, CANX, DAPK1 (via death domain), HSF4, IER3, MAP2K1/MEK1, NISCH, and SGK1. Interacts with MORG1. Interacts with PEA15. Interacts with isoform 1 of MKNK2 and this binding prevents from dephosphorylation and inactivation. Interacts with CDKN2AIP. Interacts with HSF1 (via D domain and preferentially with hyperphosphorylated form); this interaction occurs upon heat shock. Interacts with CAVIN4. Interacts with GIT1; this interaction is necessary for MAPK3 localization to focal adhesions. Interacts with ZNF263. Interacts with EBF4. Mg(2+) is required as a cofactor. Post-translationally, dually phosphorylated on Thr-203 and Tyr-205, which activates the enzyme. Ligand-activated ALK induces tyrosine phosphorylation. Dephosphorylated by PTPRJ at Tyr-205. Autophosphorylated on threonine and tyrosine residues in vitro. Phosphorylated upon FLT3 and KIT signaling. In terms of processing, ubiquitinated by TRIM15 via 'Lys-63'-linked ubiquitination; leading to activation. Deubiquitinated by CYLD.

The protein resides in the cytoplasm. It localises to the nucleus. The protein localises to the membrane. It is found in the caveola. Its subcellular location is the cell junction. The protein resides in the focal adhesion. It catalyses the reaction L-seryl-[protein] + ATP = O-phospho-L-seryl-[protein] + ADP + H(+). It carries out the reaction L-threonyl-[protein] + ATP = O-phospho-L-threonyl-[protein] + ADP + H(+). Phosphorylated by MAP2K1/MEK1 and MAP2K2/MEK2 on Thr-203 and Tyr-205 in response to external stimuli like insulin or NGF. Both phosphorylations are required for activity. This phosphorylation causes dramatic conformational changes, which enable full activation and interaction of MAPK1/ERK2 with its substrates. Dephosphorylated and inactivated by DUSP3, DUSP6 and DUSP9. Functionally, serine/threonine kinase which acts as an essential component of the MAP kinase signal transduction pathway. MAPK1/ERK2 and MAPK3/ERK1 are the 2 MAPKs which play an important role in the MAPK/ERK cascade. They participate also in a signaling cascade initiated by activated KIT and KITLG/SCF. Depending on the cellular context, the MAPK/ERK cascade mediates diverse biological functions such as cell growth, adhesion, survival and differentiation through the regulation of transcription, translation, cytoskeletal rearrangements. The MAPK/ERK cascade also plays a role in initiation and regulation of meiosis, mitosis, and postmitotic functions in differentiated cells by phosphorylating a number of transcription factors. About 160 substrates have already been discovered for ERKs. Many of these substrates are localized in the nucleus, and seem to participate in the regulation of transcription upon stimulation. However, other substrates are found in the cytosol as well as in other cellular organelles, and those are responsible for processes such as translation, mitosis and apoptosis. Moreover, the MAPK/ERK cascade is also involved in the regulation of the endosomal dynamics, including lysosome processing and endosome cycling through the perinuclear recycling compartment (PNRC); as well as in the fragmentation of the Golgi apparatus during mitosis. The substrates include transcription factors (such as ATF2, BCL6, ELK1, ERF, FOS, HSF4 or SPZ1), cytoskeletal elements (such as CANX, CTTN, GJA1, MAP2, MAPT, PXN, SORBS3 or STMN1), regulators of apoptosis (such as BAD, BTG2, CASP9, DAPK1, IER3, MCL1 or PPARG), regulators of translation (such as EIF4EBP1) and a variety of other signaling-related molecules (like ARHGEF2, DEPTOR, FRS2 or GRB10). Protein kinases (such as RAF1, RPS6KA1/RSK1, RPS6KA3/RSK2, RPS6KA2/RSK3, RPS6KA6/RSK4, SYK, MKNK1/MNK1, MKNK2/MNK2, RPS6KA5/MSK1, RPS6KA4/MSK2, MAPKAPK3 or MAPKAPK5) and phosphatases (such as DUSP1, DUSP4, DUSP6 or DUSP16) are other substrates which enable the propagation the MAPK/ERK signal to additional cytosolic and nuclear targets, thereby extending the specificity of the cascade. In Mus musculus (Mouse), this protein is Mitogen-activated protein kinase 3 (Mapk3).